The sequence spans 318 residues: MGKIVKERVFCKAGTQGVNITTNFKHKLQSLYKKNVKKAIDMEIVEASKRIKLMFLPTTYCKIGENTDAINRHINITRSSAVSSMMAGDSILSVSNKVERTIHRFTEGEDALSFFKIYMQPKINCLYTPNNDVFCHFLSALKDNIVRATVFSCIDSLSCCDGKQVRVYLDEINPSTGKLLAVVRIAVNDRSDKGIDLGLDLLGMVKSTSLISTMTNTSKNLCLESVNYRIRTDNILVDTNDVECESAEEYKRRVDSGLPFVATKSKRTLFIDTDRERTDKIVVDFAIDLPAVNVVDKNNYSDLIKADGQMQPLLRYLL.

This is an uncharacterized protein from Ostreid herpesvirus 1 (isolate France) (OsHV-1).